Consider the following 869-residue polypeptide: Alanine--tRNA ligase (869 aa).

4 residues coordinate Zn(2+): His-559, His-563, Cys-660, and His-664.

This sequence belongs to the class-II aminoacyl-tRNA synthetase family. The cofactor is Zn(2+).

The protein resides in the cytoplasm. It catalyses the reaction tRNA(Ala) + L-alanine + ATP = L-alanyl-tRNA(Ala) + AMP + diphosphate. Its function is as follows. Catalyzes the attachment of alanine to tRNA(Ala) in a two-step reaction: alanine is first activated by ATP to form Ala-AMP and then transferred to the acceptor end of tRNA(Ala). Also edits incorrectly charged Ser-tRNA(Ala) and Gly-tRNA(Ala) via its editing domain. This Janthinobacterium sp. (strain Marseille) (Minibacterium massiliensis) protein is Alanine--tRNA ligase.